A 293-amino-acid chain; its full sequence is tRNA pseudouridine synthase B (293 aa).

The active-site Nucleophile is Asp-38.

Belongs to the pseudouridine synthase TruB family. Type 1 subfamily.

The enzyme catalyses uridine(55) in tRNA = pseudouridine(55) in tRNA. Responsible for synthesis of pseudouridine from uracil-55 in the psi GC loop of transfer RNAs. The polypeptide is tRNA pseudouridine synthase B (Solibacter usitatus (strain Ellin6076)).